The primary structure comprises 278 residues: Small ribosomal subunit protein uS2 (278 aa).

Residue Ser-2 is modified to N-acetylserine. The disordered stretch occupies residues 258-278; the sequence is TNEGKTAADEWATGAQTQSNW.

This sequence belongs to the universal ribosomal protein uS2 family. Component of the small ribosomal subunit. Mature ribosomes consist of a small (40S) and a large (60S) subunit. The 40S subunit contains about 33 different proteins and 1 molecule of RNA (18S). The 60S subunit contains about 49 different proteins and 3 molecules of RNA (28S, 5.8S and 5S). Interacts with rps-21.

It localises to the cytoplasm. Functionally, required for the assembly and/or stability of the 40S ribosomal subunit. Required for the processing of the 20S rRNA-precursor to mature 18S rRNA in a late step of the maturation of 40S ribosomal subunits. The chain is Small ribosomal subunit protein uS2 from Caenorhabditis briggsae.